The primary structure comprises 985 residues: Exocyst complex component 4 (985 aa).

Positions Ser36–Gln70 form a coiled coil. 5 positions are modified to phosphoserine: Ser235, Ser456, Ser459, Ser682, and Ser686. A disordered region spans residues Asp434–Phe480.

The protein belongs to the SEC8 family. In terms of assembly, the exocyst complex is composed of Sec3/Exoc1, Sec5/Exoc2, Sec6/Exoc3, Sec8/Exoc4, Sec10/Exoc5, Sec15/Exoc6, exo70/Exoc7 and Exo84/Exoc8. In terms of tissue distribution, abundant in the embryonic and larval glutamatergic neuromuscular junctions (NMJs), pre and postsynaptically.

Functionally, component of the exocyst complex involved in the docking of exocytic vesicles with fusion sites on the plasma membrane. Involved in regulation of synaptic microtubule formation, and also regulation of synaptic growth and glutamate receptor trafficking. Does not appear to be required for basal neurotransmission. This Drosophila melanogaster (Fruit fly) protein is Exocyst complex component 4.